Reading from the N-terminus, the 443-residue chain is UDP-N-acetylmuramate--L-alanine ligase (443 aa).

110–116 (GAHGKTS) is a binding site for ATP.

This sequence belongs to the MurCDEF family.

Its subcellular location is the cytoplasm. The catalysed reaction is UDP-N-acetyl-alpha-D-muramate + L-alanine + ATP = UDP-N-acetyl-alpha-D-muramoyl-L-alanine + ADP + phosphate + H(+). Its pathway is cell wall biogenesis; peptidoglycan biosynthesis. Functionally, cell wall formation. The sequence is that of UDP-N-acetylmuramate--L-alanine ligase from Streptococcus gordonii (strain Challis / ATCC 35105 / BCRC 15272 / CH1 / DL1 / V288).